The following is a 152-amino-acid chain: Transcriptional repressor NrdR (152 aa).

A zinc finger spans residues 3–34; that stretch reads CPYCQHPDSDVIDTRKLHNGETIRRRRKCEAC. The region spanning 49–139 is the ATP-cone domain; sequence ITVVKKNGER…VYRSFADIGK (91 aa).

The protein belongs to the NrdR family. Zn(2+) serves as cofactor.

Functionally, negatively regulates transcription of bacterial ribonucleotide reductase nrd genes and operons by binding to NrdR-boxes. This Roseiflexus castenholzii (strain DSM 13941 / HLO8) protein is Transcriptional repressor NrdR.